The chain runs to 356 residues: 3-dehydroquinate synthase (356 aa).

NAD(+) is bound by residues 106 to 110, 130 to 131, Lys143, and Lys152; these read GVVGD and TT. Positions 185, 248, and 265 each coordinate Zn(2+).

This sequence belongs to the sugar phosphate cyclases superfamily. Dehydroquinate synthase family. Requires NAD(+) as cofactor. Co(2+) is required as a cofactor. Zn(2+) serves as cofactor.

The protein resides in the cytoplasm. The catalysed reaction is 7-phospho-2-dehydro-3-deoxy-D-arabino-heptonate = 3-dehydroquinate + phosphate. The protein operates within metabolic intermediate biosynthesis; chorismate biosynthesis; chorismate from D-erythrose 4-phosphate and phosphoenolpyruvate: step 2/7. In terms of biological role, catalyzes the conversion of 3-deoxy-D-arabino-heptulosonate 7-phosphate (DAHP) to dehydroquinate (DHQ). This Caldanaerobacter subterraneus subsp. tengcongensis (strain DSM 15242 / JCM 11007 / NBRC 100824 / MB4) (Thermoanaerobacter tengcongensis) protein is 3-dehydroquinate synthase.